The primary structure comprises 197 residues: Phosphoheptose isomerase (197 aa).

Positions 41-197 (VVETFRRGGK…EIVERTLFEE (157 aa)) constitute an SIS domain. 56–58 (NGG) is a substrate binding site. Zn(2+)-binding residues include histidine 65 and glutamate 69. Residues glutamate 69, 98–99 (ND), 124–126 (STS), serine 129, and glutamine 176 contribute to the substrate site. The Zn(2+) site is built by glutamine 176 and histidine 184.

This sequence belongs to the SIS family. GmhA subfamily. Zn(2+) is required as a cofactor.

It localises to the cytoplasm. The catalysed reaction is 2 D-sedoheptulose 7-phosphate = D-glycero-alpha-D-manno-heptose 7-phosphate + D-glycero-beta-D-manno-heptose 7-phosphate. Its pathway is carbohydrate biosynthesis; D-glycero-D-manno-heptose 7-phosphate biosynthesis; D-glycero-alpha-D-manno-heptose 7-phosphate and D-glycero-beta-D-manno-heptose 7-phosphate from sedoheptulose 7-phosphate: step 1/1. Its function is as follows. Catalyzes the isomerization of sedoheptulose 7-phosphate in D-glycero-D-manno-heptose 7-phosphate. This is Phosphoheptose isomerase from Roseiflexus sp. (strain RS-1).